The sequence spans 386 residues: MKKEMLAMILAGGQGSRLGVFTKRIAKPAVSFGGKYRIIDFVLSNCSNSGIDTVGVLTQYRPLILNSHIGMGSHWDLDRINGGVYVLQPFMNEKEGNWYNGTAHAIYQNMDFVDTYNPEYVLILSGDHIYKMDYSKMLKFHKEKGSKATIAVIEVPWDEASRFGIMNTNEDSSIYEFEEKPSEPKSNLASMGVYIFDWKMLRNYFKEAEKNPEINYDDFGKNLIPKMLEDNVGMYAYPFKGYWRDVGTIQSLWDANMDIIKSPETLDLADPKWKIYTNTMAMPPQYIGKNANVHRSMIADGCRILGEVGNSVLSHGVVVGKGSKVIDSVIMPNVVIGENVTIEKAMIGECATINDNVQIKNVNNEINVVSEYENIEPRCVLIEGGL.

Alpha-D-glucose 1-phosphate contacts are provided by residues Tyr99, Gly164, 179 to 180, and Ser190; that span reads EK.

This sequence belongs to the bacterial/plant glucose-1-phosphate adenylyltransferase family. As to quaternary structure, homotetramer.

It carries out the reaction alpha-D-glucose 1-phosphate + ATP + H(+) = ADP-alpha-D-glucose + diphosphate. It participates in glycan biosynthesis; glycogen biosynthesis. Its function is as follows. Involved in the biosynthesis of ADP-glucose, a building block required for the elongation reactions to produce glycogen. Catalyzes the reaction between ATP and alpha-D-glucose 1-phosphate (G1P) to produce pyrophosphate and ADP-Glc. In Clostridioides difficile (strain 630) (Peptoclostridium difficile), this protein is Glucose-1-phosphate adenylyltransferase.